The sequence spans 513 residues: Protein CYCLOPS (513 aa).

Disordered regions lie at residues 329-380 and 395-435; these read QGRT…STQN and DDRK…AEAK. Positions 333–347 are enriched in low complexity; that stretch reads ASGEPSQSESSAAAP. The segment covering 359 to 380 has biased composition (polar residues); the sequence is PSNSNQTLGDSSWKQVGESTQN. 2 consecutive short sequence motifs (nuclear localization signal) follow at residues 397–400 and 421–424; these read RKRK and KKRR. The stretch at 447–513 forms a coiled coil; the sequence is MQAILKRCEN…ERILSETGKI (67 aa).

The protein belongs to the CYCLOPS family. Forms homodimers. Interacts with CCAMK. In terms of tissue distribution, highly expressed in roots. Expressed in root hairs and nodules. Not detected in leaves or flowers.

It is found in the nucleus. In terms of biological role, involved symbiotic signaling. Required for root infection by symbiotic rhizobia, infection thread (IT) formation, and nodule development. Required for proper induction of early nodulin gene expression. Probably not involved in nodule organogenesis. Involved in arbuscular mycorrhizal (AM) symbiosis. Required for fungal infection of the outer cortical cell layers, and for arbuscule development during the AM symbiosis. Acts downstream of CCAMK. Required for symbiosome formation (i.e. the release of the bacteria from the ITs) and subsequent symbiosome development. Required for the expression of the nodule-specific RPG gene, which controls proper IT growth and is essential for symbiosome formation. Acts upstream of ERN1, a transcriptional regulator required for nodulation. The chain is Protein CYCLOPS from Medicago truncatula (Barrel medic).